The following is a 118-amino-acid chain: Holo-[acyl-carrier-protein] synthase (118 aa).

2 residues coordinate Mg(2+): Asp-5 and Glu-50.

The protein belongs to the P-Pant transferase superfamily. AcpS family. The cofactor is Mg(2+).

The protein localises to the cytoplasm. The enzyme catalyses apo-[ACP] + CoA = holo-[ACP] + adenosine 3',5'-bisphosphate + H(+). Transfers the 4'-phosphopantetheine moiety from coenzyme A to a Ser of acyl-carrier-protein. The protein is Holo-[acyl-carrier-protein] synthase of Aliarcobacter butzleri (strain RM4018) (Arcobacter butzleri).